The chain runs to 448 residues: MAVELAGPFAEVLRAAAIGPASRLCCALSGGVDSVVTLDLLTRLQPRFGFTLTAVHVHHGLSPHADAWAQFCARLCAARGLTLAIRRVEVPTDTGQGLESAARARRHAELVALPCDWLVFGHHQDDQAETVLFRLFRGSGLRGLGAMAAVEPGQHAMPGKLRPLLDIGRAGIVAYARAAGLEWIEDESNADCRFTRNALRHKVLPVVQAQFPAVAPTLARTAALLREGADLLDDLARLDENACGGPVLAADVFASLPAARAANLLRWQTARMGARAPSRARLGETLRQLREAPGPLRLPLGDLWCCAYQGRVWLERDDEAPLRAHLWCGESSLGWGAGQVRLSQGGGGAALRVAAGEAMLAPPAPGLRMRLGPGRPTRSFKNLCQEAGIPPWLRPRLPVLWVAGEPAWIGGIGIAAQFQCAEGEQGVVPAWVPASAAQQGQHLGQFDR.

29–34 (SGGVDS) is a binding site for ATP.

This sequence belongs to the tRNA(Ile)-lysidine synthase family.

Its subcellular location is the cytoplasm. The catalysed reaction is cytidine(34) in tRNA(Ile2) + L-lysine + ATP = lysidine(34) in tRNA(Ile2) + AMP + diphosphate + H(+). Its function is as follows. Ligates lysine onto the cytidine present at position 34 of the AUA codon-specific tRNA(Ile) that contains the anticodon CAU, in an ATP-dependent manner. Cytidine is converted to lysidine, thus changing the amino acid specificity of the tRNA from methionine to isoleucine. In Azoarcus sp. (strain BH72), this protein is tRNA(Ile)-lysidine synthase.